A 322-amino-acid chain; its full sequence is Malate dehydrogenase (322 aa).

Residues 10-15 (GSGMIG) and D34 contribute to the NAD(+) site. Residues R83 and R89 each coordinate substrate. NAD(+)-binding positions include N96 and 119-121 (ITN). N121 and R152 together coordinate substrate. The active-site Proton acceptor is H176.

The protein belongs to the LDH/MDH superfamily. MDH type 3 family.

It catalyses the reaction (S)-malate + NAD(+) = oxaloacetate + NADH + H(+). Functionally, catalyzes the reversible oxidation of malate to oxaloacetate. This is Malate dehydrogenase from Mesorhizobium japonicum (strain LMG 29417 / CECT 9101 / MAFF 303099) (Mesorhizobium loti (strain MAFF 303099)).